Reading from the N-terminus, the 184-residue chain is Interferon alpha-3 (184 aa).

The N-terminal stretch at 1-23 is a signal peptide; it reads MALPVSLLMALVVLSCHSSCSLG. Disulfide bonds link cysteine 24/cysteine 122 and cysteine 52/cysteine 162.

The protein belongs to the alpha/beta interferon family.

It localises to the secreted. Functionally, produced by macrophages, IFN-alpha have antiviral activities. Interferon stimulates the production of two enzymes: a protein kinase and an oligoadenylate synthetase. The protein is Interferon alpha-3 of Equus caballus (Horse).